The following is a 334-amino-acid chain: Protein-methionine-sulfoxide reductase catalytic subunit MsrP (334 aa).

The segment at residues 1 to 44 (MKKNQFLKESDVTAESVFFMTRRQVLKALGISAAALSLPHAAHA) is a signal peptide (tat-type signal). Mo-molybdopterin-binding positions include Asn88, 91–92 (YE), Cys146, Thr181, Asn233, Arg238, and 249–251 (GIK).

Belongs to the MsrP family. As to quaternary structure, heterodimer of a catalytic subunit (MsrP) and a heme-binding subunit (MsrQ). It depends on Mo-molybdopterin as a cofactor. In terms of processing, predicted to be exported by the Tat system. The position of the signal peptide cleavage has not been experimentally proven.

The protein localises to the periplasm. It catalyses the reaction L-methionyl-[protein] + a quinone + H2O = L-methionyl-(S)-S-oxide-[protein] + a quinol. The enzyme catalyses L-methionyl-[protein] + a quinone + H2O = L-methionyl-(R)-S-oxide-[protein] + a quinol. Part of the MsrPQ system that repairs oxidized periplasmic proteins containing methionine sulfoxide residues (Met-O), using respiratory chain electrons. Thus protects these proteins from oxidative-stress damage caused by reactive species of oxygen and chlorine generated by the host defense mechanisms. MsrPQ is essential for the maintenance of envelope integrity under bleach stress, rescuing a wide series of structurally unrelated periplasmic proteins from methionine oxidation, including the primary periplasmic chaperone SurA and the lipoprotein Pal. The catalytic subunit MsrP is non-stereospecific, being able to reduce both (R-) and (S-) diastereoisomers of methionine sulfoxide. This is Protein-methionine-sulfoxide reductase catalytic subunit MsrP from Escherichia coli (strain 55989 / EAEC).